Here is a 361-residue protein sequence, read N- to C-terminus: Ribosomal RNA large subunit methyltransferase M (361 aa).

S-adenosyl-L-methionine contacts are provided by residues Ser-187, 220–223 (CPGG), Asp-239, Asp-259, and Asp-276. The active-site Proton acceptor is the Lys-305.

It belongs to the class I-like SAM-binding methyltransferase superfamily. RNA methyltransferase RlmE family. RlmM subfamily. In terms of assembly, monomer.

It localises to the cytoplasm. The enzyme catalyses cytidine(2498) in 23S rRNA + S-adenosyl-L-methionine = 2'-O-methylcytidine(2498) in 23S rRNA + S-adenosyl-L-homocysteine + H(+). In terms of biological role, catalyzes the 2'-O-methylation at nucleotide C2498 in 23S rRNA. This chain is Ribosomal RNA large subunit methyltransferase M, found in Shewanella sp. (strain MR-4).